The sequence spans 361 residues: 3-dehydroquinate synthase (361 aa).

It belongs to the archaeal-type DHQ synthase family.

The catalysed reaction is 2-amino-2,3,7-trideoxy-D-lyxo-hept-6-ulosonate + NAD(+) + H2O = 3-dehydroquinate + NH4(+) + NADH + H(+). In terms of biological role, catalyzes the oxidative deamination and cyclization of 2-amino-3,7-dideoxy-D-threo-hept-6-ulosonic acid (ADH) to yield 3-dehydroquinate (DHQ), which is fed into the canonical shikimic pathway of aromatic amino acid biosynthesis. The polypeptide is 3-dehydroquinate synthase (Methanococcus maripaludis (strain C6 / ATCC BAA-1332)).